Here is a 544-residue protein sequence, read N- to C-terminus: Chaperonin GroEL 1 (544 aa).

Residues 29–32 (TLGP), 86–90 (DGTTT), G413, and D495 each bind ATP. The disordered stretch occupies residues 525–544 (PEPKTNTPASSGSGMSDYDY). The segment covering 528-538 (KTNTPASSGSG) has biased composition (polar residues).

This sequence belongs to the chaperonin (HSP60) family. As to quaternary structure, forms a cylinder of 14 subunits composed of two heptameric rings stacked back-to-back. Interacts with the co-chaperonin GroES.

It is found in the cytoplasm. It carries out the reaction ATP + H2O + a folded polypeptide = ADP + phosphate + an unfolded polypeptide.. Functionally, together with its co-chaperonin GroES, plays an essential role in assisting protein folding. The GroEL-GroES system forms a nano-cage that allows encapsulation of the non-native substrate proteins and provides a physical environment optimized to promote and accelerate protein folding. The polypeptide is Chaperonin GroEL 1 (Synechococcus sp. (strain JA-2-3B'a(2-13)) (Cyanobacteria bacterium Yellowstone B-Prime)).